Reading from the N-terminus, the 117-residue chain is Ribonuclease P protein component (117 aa).

This sequence belongs to the RnpA family. As to quaternary structure, consists of a catalytic RNA component (M1 or rnpB) and a protein subunit.

The enzyme catalyses Endonucleolytic cleavage of RNA, removing 5'-extranucleotides from tRNA precursor.. In terms of biological role, RNaseP catalyzes the removal of the 5'-leader sequence from pre-tRNA to produce the mature 5'-terminus. It can also cleave other RNA substrates such as 4.5S RNA. The protein component plays an auxiliary but essential role in vivo by binding to the 5'-leader sequence and broadening the substrate specificity of the ribozyme. This is Ribonuclease P protein component from Limosilactobacillus reuteri subsp. reuteri (strain JCM 1112) (Lactobacillus reuteri).